Consider the following 360-residue polypeptide: G-protein coupled receptor 183 (360 aa).

Over 1 to 30 (MDIKMDNFTTPSAASLESDCDLYAHHHTAR) the chain is Extracellular. A glycan (N-linked (GlcNAc...) asparagine) is linked at Asn-7. The helical transmembrane segment at 31–56 (ILMPLHYSIVFIIGLVGNLLALIVII) threads the bilayer. Topologically, residues 57-76 (QNRKKINSTTLYSTNLVISD) are cytoplasmic. A helical membrane pass occupies residues 77–94 (ILFTTALPTRIAYYALGF). Arg-86 serves as a coordination point for 7alpha,25-dihydroxycholesterol. The Extracellular portion of the chain corresponds to 95-104 (DWRIGDALCR). Residues Cys-103 and Cys-180 are joined by a disulfide bond. Residues 105-126 (ITALVFYINTYAGVNFMTCLSI) traverse the membrane as a helical segment. 7alpha,25-dihydroxycholesterol is bound by residues Tyr-111 and Tyr-115. The tract at residues 125–133 (SIDRFFAVV) is interaction with G proteins. At 127–148 (DRFFAVVHPLRYNKIKRIEHAK) the chain is on the cytoplasmic side. A helical transmembrane segment spans residues 149 to 167 (CICIFVWILVFGQTLPLLI). The Extracellular portion of the chain corresponds to 168–191 (NPMSKQEAERTTCMEYPNFEETKS). A helical transmembrane segment spans residues 192 to 214 (LPWILLGACFIGYVLPLVIILIC). Over 215-240 (YSQICCKLFKTAKQNPLTEKSGVNKK) the chain is Cytoplasmic. Residues 241 to 264 (ALNTIIFIIVVFVVCFTPYHVAII) form a helical membrane-spanning segment. Residue Tyr-259 coordinates 7alpha,25-dihydroxycholesterol. At 265–286 (QHMIKKLRLPGLLECSQRHSFQ) the chain is on the extracellular side. The helical transmembrane segment at 287–311 (ISLHFTVCLMNFNCCMDPFIYFFAC) threads the bilayer. Over 312-360 (KGYKRKVMKMLKRQVSVSISSAVRSAPEENSREMTETQMMIHSKSLNGK) the chain is Cytoplasmic. Phosphoserine is present on Ser-327. A disordered region spans residues 339–360 (EENSREMTETQMMIHSKSLNGK). The span at 347-360 (ETQMMIHSKSLNGK) shows a compositional bias: polar residues.

The protein belongs to the G-protein coupled receptor 1 family. As to quaternary structure, homodimer and heterodimer. Heterodimerizes with CXCR5; leading to modulate the interaction between of CXCL13 and CXCR5.

It localises to the cell membrane. In terms of biological role, G-protein coupled receptor expressed in lymphocytes that acts as a chemotactic receptor for B-cells, T-cells, splenic dendritic cells, monocytes/macrophages and astrocytes. Receptor for oxysterol 7-alpha,25-dihydroxycholesterol (7-alpha,25-OHC) and other related oxysterols. Mediates cell positioning and movement of a number of cells by binding the 7-alpha,25-OHC ligand that forms a chemotactic gradient. Binding of 7-alpha,25-OHC mediates the correct localization of B-cells during humoral immune responses. Guides B-cell movement along the B-cell zone-T-cell zone boundary and later to interfollicular and outer follicular regions. Its specific expression during B-cell maturation helps position B-cells appropriately for mounting T-dependent antibody responses. Collaborates with CXCR5 to mediate B-cell migration; probably by forming a heterodimer with CXCR5 that affects the interaction between of CXCL13 and CXCR5. Also acts as a chemotactic receptor for some T-cells upon binding to 7-alpha,25-OHC ligand. Promotes follicular helper T (Tfh) cells differentiation by positioning activated T-cells at the follicle-T-zone interface, promoting contact of newly activated CD4 T-cells with activated dendritic cells and exposing them to Tfh-cell-promoting inducible costimulator (ICOS) ligand. Expression in splenic dendritic cells is required for their homeostasis, localization and ability to induce B- and T-cell responses: GPR183 acts as a chemotactic receptor in dendritic cells that mediates the accumulation of CD4(+) dendritic cells in bridging channels. Regulates migration of astrocytes and is involved in communication between astrocytes and macrophages. Promotes osteoclast precursor migration to bone surfaces. Signals constitutively through G(i)-alpha, but not G(s)-alpha or G(q)-alpha. Signals constitutively also via MAPK1/3 (ERK1/2). The sequence is that of G-protein coupled receptor 183 (GPR183) from Bos taurus (Bovine).